Reading from the N-terminus, the 825-residue chain is Exocyst complex component SEC10a (825 aa).

Residues 244 to 266 (RGLEVAVANLQDYCNELENRLLS) are a coiled coil.

This sequence belongs to the SEC10 family. In terms of assembly, the exocyst complex is composed of SEC3, SEC5, SEC6, SEC8, SEC10, EXO70A1 and EXO84B. Interacts with EXO84B. Binds to EXO70E2. Binds directly to B1L. In terms of tissue distribution, expressed in seedlings, roots, leaves and flowers.

It is found in the cytoplasm. It localises to the cytosol. The protein localises to the secreted. Its subcellular location is the extracellular exosome. Functionally, component of the exocyst complex involved in the docking of exocytic vesicles with fusion sites on the plasma membrane during regulated or polarized secretion. Involved in polarized cell growth and organ morphogenesis. During cytokinesis, involved in cell plate initiation, cell plate maturation and formation of new primary cell wall. The polypeptide is Exocyst complex component SEC10a (Arabidopsis thaliana (Mouse-ear cress)).